The sequence spans 545 residues: ATP synthase subunit alpha (545 aa).

173–180 (GDRQTGKT) lines the ATP pocket.

The protein belongs to the ATPase alpha/beta chains family. In terms of assembly, F-type ATPases have 2 components, CF(1) - the catalytic core - and CF(0) - the membrane proton channel. CF(1) has five subunits: alpha(3), beta(3), gamma(1), delta(1), epsilon(1). CF(0) has three main subunits: a(1), b(2) and c(9-12). The alpha and beta chains form an alternating ring which encloses part of the gamma chain. CF(1) is attached to CF(0) by a central stalk formed by the gamma and epsilon chains, while a peripheral stalk is formed by the delta and b chains.

The protein localises to the cell membrane. The enzyme catalyses ATP + H2O + 4 H(+)(in) = ADP + phosphate + 5 H(+)(out). In terms of biological role, produces ATP from ADP in the presence of a proton gradient across the membrane. The alpha chain is a regulatory subunit. This Paenarthrobacter aurescens (strain TC1) protein is ATP synthase subunit alpha.